A 691-amino-acid chain; its full sequence is DNA ligase (691 aa).

Residues 41–45 (DAEYD), 90–91 (SL), and Glu130 contribute to the NAD(+) site. The N6-AMP-lysine intermediate role is filled by Lys132. Residues Arg153, Glu190, Lys307, and Lys331 each contribute to the NAD(+) site. Zn(2+)-binding residues include Cys425, Cys428, Cys443, and Cys449. In terms of domain architecture, BRCT spans 610–691 (APQGVLAGKT…LHQLLEGNTR (82 aa)).

Belongs to the NAD-dependent DNA ligase family. LigA subfamily. Mg(2+) is required as a cofactor. Mn(2+) serves as cofactor.

It catalyses the reaction NAD(+) + (deoxyribonucleotide)n-3'-hydroxyl + 5'-phospho-(deoxyribonucleotide)m = (deoxyribonucleotide)n+m + AMP + beta-nicotinamide D-nucleotide.. Its function is as follows. DNA ligase that catalyzes the formation of phosphodiester linkages between 5'-phosphoryl and 3'-hydroxyl groups in double-stranded DNA using NAD as a coenzyme and as the energy source for the reaction. It is essential for DNA replication and repair of damaged DNA. The chain is DNA ligase from Burkholderia multivorans (strain ATCC 17616 / 249).